The sequence spans 986 residues: Epidermin biosynthesis protein EpiB (986 aa).

The protein to B.subtilis SpaB and L.lactis NisB.

The protein localises to the cell membrane. Involved in the post-translational modification of the lantibiotic epidermin. The sequence is that of Epidermin biosynthesis protein EpiB (epiB) from Staphylococcus epidermidis.